Consider the following 404-residue polypeptide: Deoxyguanosinetriphosphate triphosphohydrolase-like protein (404 aa).

The interval 1 to 33 (MSVGMAAPRAAFSCDPDRSRGRQFAEPPSSNRS) is disordered. Residues 69–217 (RLTHSLEVAQ…AALADDIAYD (149 aa)) form the HD domain.

This sequence belongs to the dGTPase family. Type 2 subfamily.

In Rhodopseudomonas palustris (strain HaA2), this protein is Deoxyguanosinetriphosphate triphosphohydrolase-like protein.